Here is a 630-residue protein sequence, read N- to C-terminus: Threonine--tRNA ligase (630 aa).

Residues 1–137 form an editing domain region; it reads MKVLLIHSDY…PLSELSRKIT (137 aa). The segment at 207–506 is catalytic; that stretch reads PHVKFITEKE…ADAGAPPMLP (300 aa). Zn(2+) contacts are provided by Cys299, His351, and His475.

The protein belongs to the class-II aminoacyl-tRNA synthetase family. In terms of assembly, homodimer. Zn(2+) is required as a cofactor.

The protein resides in the cytoplasm. It catalyses the reaction tRNA(Thr) + L-threonine + ATP = L-threonyl-tRNA(Thr) + AMP + diphosphate + H(+). In terms of biological role, catalyzes the attachment of threonine to tRNA(Thr) in a two-step reaction: L-threonine is first activated by ATP to form Thr-AMP and then transferred to the acceptor end of tRNA(Thr). Also edits incorrectly charged L-seryl-tRNA(Thr). The chain is Threonine--tRNA ligase from Methanococcus aeolicus (strain ATCC BAA-1280 / DSM 17508 / OCM 812 / Nankai-3).